Here is a 473-residue protein sequence, read N- to C-terminus: Glutamate--tRNA ligase (473 aa).

A 'HIGH' region motif is present at residues 11–21; sequence PSPTGFLHIGG. Residues 240–244 carry the 'KMSKS' region motif; sequence KLSKR. ATP is bound at residue K243.

This sequence belongs to the class-I aminoacyl-tRNA synthetase family. Glutamate--tRNA ligase type 1 subfamily. In terms of assembly, monomer.

The protein resides in the cytoplasm. It carries out the reaction tRNA(Glu) + L-glutamate + ATP = L-glutamyl-tRNA(Glu) + AMP + diphosphate. In terms of biological role, catalyzes the attachment of glutamate to tRNA(Glu) in a two-step reaction: glutamate is first activated by ATP to form Glu-AMP and then transferred to the acceptor end of tRNA(Glu). This is Glutamate--tRNA ligase from Rhodopseudomonas palustris (strain BisB5).